The primary structure comprises 512 residues: Retinaldehyde dehydrogenase 3 (512 aa).

The segment at 1-22 (MATANGAVENGQPDRKPPALPR) is disordered. At A2 the chain carries N-acetylalanine. Residues K204, E207, and 257-262 (GSTEVG) each bind NAD(+). The active-site Proton acceptor is E280. The active-site Nucleophile is the C314. NAD(+) is bound by residues Q361 and E411.

This sequence belongs to the aldehyde dehydrogenase family. As to quaternary structure, homotetramer. In terms of tissue distribution, expressed at low levels in many tissues and at higher levels in salivary gland, stomach, and kidney.

The protein localises to the cytoplasm. The catalysed reaction is all-trans-retinal + NAD(+) + H2O = all-trans-retinoate + NADH + 2 H(+). The enzyme catalyses retinal + NAD(+) + H2O = retinoate + NADH + 2 H(+). It carries out the reaction all-trans-13,14-dihydroretinal + NAD(+) + H2O = all-trans-13,14-dihydroretinoate + NADH + 2 H(+). Its pathway is cofactor metabolism; retinol metabolism. Functionally, catalyzes the NAD-dependent oxidation of aldehyde substrates, such as all-trans-retinal and all-trans-13,14-dihydroretinal, to their corresponding carboxylic acids, all-trans-retinoate and all-trans-13,14-dihydroretinoate, respectively. High specificity for all-trans-retinal as substrate, can also accept acetaldehyde as substrate in vitro but with lower affinity. Required for the biosynthesis of normal levels of retinoate in the embryonic ocular and nasal regions; a critical lipid in the embryonic development of the eye and the nasal region. This is Retinaldehyde dehydrogenase 3 (ALDH1A3) from Homo sapiens (Human).